Consider the following 168-residue polypeptide: Ribosome maturation factor RimP (168 aa).

Belongs to the RimP family.

Its subcellular location is the cytoplasm. Its function is as follows. Required for maturation of 30S ribosomal subunits. The sequence is that of Ribosome maturation factor RimP from Rickettsia bellii (strain OSU 85-389).